A 487-amino-acid polypeptide reads, in one-letter code: GTPase Der (487 aa).

EngA-type G domains follow at residues 3–166 (PVIA…PRDA) and 193–366 (IKIA…KSAV). GTP contacts are provided by residues 9–16 (GRPNVGKS), 56–60 (DTGGI), 118–121 (NKID), 199–206 (GRPNVGKS), 246–250 (DTAGV), and 311–314 (NKWD). Residues 367 to 451 (TRWPTSRLTQ…PIRIEYKGGE (85 aa)) form the KH-like domain. The segment covering 449–461 (GGENPFEGKKNTL) has biased composition (basic and acidic residues). Residues 449–487 (GGENPFEGKKNTLTDRQVNKKRRLMSHHKKAEKKRRDKR) are disordered. Residues 467–487 (NKKRRLMSHHKKAEKKRRDKR) show a composition bias toward basic residues.

This sequence belongs to the TRAFAC class TrmE-Era-EngA-EngB-Septin-like GTPase superfamily. EngA (Der) GTPase family. In terms of assembly, associates with the 50S ribosomal subunit.

Functionally, GTPase that plays an essential role in the late steps of ribosome biogenesis. The protein is GTPase Der of Pseudomonas putida (strain GB-1).